Consider the following 66-residue polypeptide: Large ribosomal subunit protein bL31 (66 aa).

The Zn(2+) site is built by Cys-16, Cys-18, Cys-36, and Cys-39.

Belongs to the bacterial ribosomal protein bL31 family. Type A subfamily. In terms of assembly, part of the 50S ribosomal subunit. Zn(2+) is required as a cofactor.

Functionally, binds the 23S rRNA. The polypeptide is Large ribosomal subunit protein bL31 (Sulfurimonas denitrificans (strain ATCC 33889 / DSM 1251) (Thiomicrospira denitrificans (strain ATCC 33889 / DSM 1251))).